Consider the following 334-residue polypeptide: tRNA uridine(34) hydroxylase (334 aa).

The 95-residue stretch at 123–217 (SDPDVILVDT…YLEEVKQEES (95 aa)) folds into the Rhodanese domain. Residue cysteine 177 is the Cysteine persulfide intermediate of the active site.

The protein belongs to the TrhO family.

It catalyses the reaction uridine(34) in tRNA + AH2 + O2 = 5-hydroxyuridine(34) in tRNA + A + H2O. Functionally, catalyzes oxygen-dependent 5-hydroxyuridine (ho5U) modification at position 34 in tRNAs. This Shewanella putrefaciens (strain CN-32 / ATCC BAA-453) protein is tRNA uridine(34) hydroxylase.